The chain runs to 178 residues: uncharacterized protein (178 aa).

This is an uncharacterized protein from Sinorhizobium fredii (strain NBRC 101917 / NGR234).